The following is a 432-amino-acid chain: Lipid-A-disaccharide synthase (432 aa).

A compositionally biased stretch (polar residues) spans Met1–Ile11. A disordered region spans residues Met1–Leu35.

It belongs to the LpxB family.

The enzyme catalyses a lipid X + a UDP-2-N,3-O-bis[(3R)-3-hydroxyacyl]-alpha-D-glucosamine = a lipid A disaccharide + UDP + H(+). Its pathway is bacterial outer membrane biogenesis; LPS lipid A biosynthesis. Condensation of UDP-2,3-diacylglucosamine and 2,3-diacylglucosamine-1-phosphate to form lipid A disaccharide, a precursor of lipid A, a phosphorylated glycolipid that anchors the lipopolysaccharide to the outer membrane of the cell. The protein is Lipid-A-disaccharide synthase of Xanthomonas oryzae pv. oryzae (strain MAFF 311018).